Consider the following 144-residue polypeptide: Large ribosomal subunit protein uL15 (144 aa).

Residues 1 to 54 (MRLNTIKPGEGSKKTAKRVGRGIGSGLGKTCGRGHKGQKSRSGGFHKVGFEGGQ) form a disordered region. Positions 21–31 (RGIGSGLGKTC) are enriched in gly residues.

It belongs to the universal ribosomal protein uL15 family. In terms of assembly, part of the 50S ribosomal subunit.

In terms of biological role, binds to the 23S rRNA. The polypeptide is Large ribosomal subunit protein uL15 (Dechloromonas aromatica (strain RCB)).